The primary structure comprises 136 residues: MKSGEPVNSHDVTDEQWEGLAQVVPLRGRDAWPSAVGHRAMPEAETERRRRFVVLRINVFADAREVAETLMAGIPVLLDLTSAEGEVAKRVLDFSTGVVFGLASGMHRVDRNVFLLTPAGTEVNGLMESAAGVPGV.

The protein belongs to the SepF family. Homodimer. Interacts with FtsZ.

It localises to the cytoplasm. Cell division protein that is part of the divisome complex and is recruited early to the Z-ring. Probably stimulates Z-ring formation, perhaps through the cross-linking of FtsZ protofilaments. Its function overlaps with FtsA. The polypeptide is Cell division protein SepF 3 (Streptomyces coelicolor (strain ATCC BAA-471 / A3(2) / M145)).